We begin with the raw amino-acid sequence, 218 residues long: Deoxyribose-phosphate aldolase (218 aa).

Asp92 (proton donor/acceptor) is an active-site residue. Residue Lys155 is the Schiff-base intermediate with acetaldehyde of the active site. The Proton donor/acceptor role is filled by Lys184.

It belongs to the DeoC/FbaB aldolase family. DeoC type 1 subfamily.

The protein resides in the cytoplasm. It catalyses the reaction 2-deoxy-D-ribose 5-phosphate = D-glyceraldehyde 3-phosphate + acetaldehyde. The protein operates within carbohydrate degradation; 2-deoxy-D-ribose 1-phosphate degradation; D-glyceraldehyde 3-phosphate and acetaldehyde from 2-deoxy-alpha-D-ribose 1-phosphate: step 2/2. Catalyzes a reversible aldol reaction between acetaldehyde and D-glyceraldehyde 3-phosphate to generate 2-deoxy-D-ribose 5-phosphate. This Clostridium kluyveri (strain NBRC 12016) protein is Deoxyribose-phosphate aldolase.